The primary structure comprises 163 residues: Crossover junction endodeoxyribonuclease RuvC (163 aa).

Residues D7, E66, and D139 contribute to the active site. Residues D7, E66, and D139 each coordinate Mg(2+).

This sequence belongs to the RuvC family. In terms of assembly, homodimer which binds Holliday junction (HJ) DNA. The HJ becomes 2-fold symmetrical on binding to RuvC with unstacked arms; it has a different conformation from HJ DNA in complex with RuvA. In the full resolvosome a probable DNA-RuvA(4)-RuvB(12)-RuvC(2) complex forms which resolves the HJ. The cofactor is Mg(2+).

The protein resides in the cytoplasm. It carries out the reaction Endonucleolytic cleavage at a junction such as a reciprocal single-stranded crossover between two homologous DNA duplexes (Holliday junction).. Functionally, the RuvA-RuvB-RuvC complex processes Holliday junction (HJ) DNA during genetic recombination and DNA repair. Endonuclease that resolves HJ intermediates. Cleaves cruciform DNA by making single-stranded nicks across the HJ at symmetrical positions within the homologous arms, yielding a 5'-phosphate and a 3'-hydroxyl group; requires a central core of homology in the junction. The consensus cleavage sequence is 5'-(A/T)TT(C/G)-3'. Cleavage occurs on the 3'-side of the TT dinucleotide at the point of strand exchange. HJ branch migration catalyzed by RuvA-RuvB allows RuvC to scan DNA until it finds its consensus sequence, where it cleaves and resolves the cruciform DNA. The sequence is that of Crossover junction endodeoxyribonuclease RuvC from Thermomicrobium roseum (strain ATCC 27502 / DSM 5159 / P-2).